A 104-amino-acid chain; its full sequence is Large ribosomal subunit protein uL24 (104 aa).

Belongs to the universal ribosomal protein uL24 family. In terms of assembly, part of the 50S ribosomal subunit.

In terms of biological role, one of two assembly initiator proteins, it binds directly to the 5'-end of the 23S rRNA, where it nucleates assembly of the 50S subunit. Its function is as follows. One of the proteins that surrounds the polypeptide exit tunnel on the outside of the subunit. This chain is Large ribosomal subunit protein uL24, found in Shewanella sp. (strain W3-18-1).